Reading from the N-terminus, the 488-residue chain is E3 ubiquitin-protein ligase TRIM39 (488 aa).

The segment at 29 to 70 (CSVCLEYLKEPVIIECGHNFCKACITRWWEDLERDFPCPVCR) adopts an RING-type zinc-finger fold. The segment at 102-143 (RDESLCSQHHEPLSLFCYEDQEAVCLICAISHTHRPHTVVPM) adopts a B box-type zinc-finger fold. Cys107, His110, Cys129, and His135 together coordinate Zn(2+). Residues 181–250 (ELKRLVESRR…AHLAAEVEGK (70 aa)) adopt a coiled-coil conformation. 2 interaction with CDKN1A regions span residues 268–307 (KCEK…QLIA) and 359–488 (TSGR…TDWE). Positions 289–484 (SNFPRQYFAL…NAAPLTIRPP (196 aa)) constitute a B30.2/SPRY domain.

This sequence belongs to the TRIM/RBCC family. Interacts with MOAP1. Interacts with CDKN1A. In terms of processing, autoubiquitinated.

It localises to the cytoplasm. The protein resides in the cytosol. The protein localises to the mitochondrion. Its subcellular location is the nucleus. The catalysed reaction is S-ubiquitinyl-[E2 ubiquitin-conjugating enzyme]-L-cysteine + [acceptor protein]-L-lysine = [E2 ubiquitin-conjugating enzyme]-L-cysteine + N(6)-ubiquitinyl-[acceptor protein]-L-lysine.. It functions in the pathway protein modification; protein ubiquitination. Its function is as follows. E3 ubiquitin-protein ligase. May facilitate apoptosis by inhibiting APC/C-Cdh1-mediated poly-ubiquitination and subsequent proteasome-mediated degradation of the pro-apoptotic protein MOAP1. Regulates the G1/S transition of the cell cycle and DNA damage-induced G2 arrest by stabilizing CDKN1A/p21. Positively regulates CDKN1A/p21 stability by competing with DTL for CDKN1A/p21 binding, therefore disrupting DCX(DTL) E3 ubiquitin ligase complex-mediated CDKN1A/p21 ubiquitination and degradation. The protein is E3 ubiquitin-protein ligase TRIM39 (Trim39) of Mus musculus (Mouse).